Consider the following 429-residue polypeptide: Probable M18 family aminopeptidase 2 (429 aa).

Zn(2+) contacts are provided by histidine 82, histidine 156, and histidine 401.

The protein belongs to the peptidase M18 family. The cofactor is Zn(2+).

In Pseudomonas aeruginosa (strain LESB58), this protein is Probable M18 family aminopeptidase 2.